We begin with the raw amino-acid sequence, 320 residues long: Malate dehydrogenase (320 aa).

NAD(+) contacts are provided by residues 10-15 and Asp-34; that span reads GAGQIG. The substrate site is built by Arg-83 and Arg-89. NAD(+) contacts are provided by residues Asn-96 and 119-121; that span reads ITN. Residues Asn-121 and Arg-152 each contribute to the substrate site. The Proton acceptor role is filled by His-176.

The protein belongs to the LDH/MDH superfamily. MDH type 3 family.

The catalysed reaction is (S)-malate + NAD(+) = oxaloacetate + NADH + H(+). In terms of biological role, catalyzes the reversible oxidation of malate to oxaloacetate. The sequence is that of Malate dehydrogenase from Cereibacter sphaeroides (strain ATCC 17025 / ATH 2.4.3) (Rhodobacter sphaeroides).